The sequence spans 541 residues: Arginine--tRNA ligase (541 aa).

A 'HIGH' region motif is present at residues 119–129 (ANPTGPLHIGH).

It belongs to the class-I aminoacyl-tRNA synthetase family. As to quaternary structure, monomer.

The protein localises to the cytoplasm. It carries out the reaction tRNA(Arg) + L-arginine + ATP = L-arginyl-tRNA(Arg) + AMP + diphosphate. The sequence is that of Arginine--tRNA ligase from Helicobacter pylori (strain G27).